The chain runs to 216 residues: 3-isopropylmalate dehydratase small subunit (216 aa).

This sequence belongs to the LeuD family. LeuD type 1 subfamily. In terms of assembly, heterodimer of LeuC and LeuD.

The catalysed reaction is (2R,3S)-3-isopropylmalate = (2S)-2-isopropylmalate. Its pathway is amino-acid biosynthesis; L-leucine biosynthesis; L-leucine from 3-methyl-2-oxobutanoate: step 2/4. In terms of biological role, catalyzes the isomerization between 2-isopropylmalate and 3-isopropylmalate, via the formation of 2-isopropylmaleate. The polypeptide is 3-isopropylmalate dehydratase small subunit (Burkholderia mallei (strain NCTC 10247)).